Here is an 83-residue protein sequence, read N- to C-terminus: Small ribosomal subunit protein bS16 (83 aa).

The protein belongs to the bacterial ribosomal protein bS16 family.

This Pseudomonas fluorescens (strain Pf0-1) protein is Small ribosomal subunit protein bS16.